Consider the following 163-residue polypeptide: MASEHSFDISAALDKQELKNAFEQAKKELDSRYDLKGIKCEIDLSEKESIFKLSSSSEGKLDVLKDIVISKLIKRGINPNAIKELSRESGAMFRLNLKANDAIDSENAKKINKAIKDSKLKVNSSIRGEEIRVAAKQIDDLQAVMKLVKELDLELNISFKNLK.

This sequence belongs to the YajQ family.

Nucleotide-binding protein. The protein is Nucleotide-binding protein C8J_0350 of Campylobacter jejuni subsp. jejuni serotype O:6 (strain 81116 / NCTC 11828).